An 837-amino-acid chain; its full sequence is VNCSVDCQLQVFNWSCPSTPSTPPPSTPTTPTSSQTTTPSTPSTTSSKSTPSTPQSTSSKSTPSTPPKTTLPGCLDFDPPRQVNETWWLCNCTMAICKYDNVVEIVELECNPPPMPTCSNGLKPVRVPDPDGCCWHWECDCYCTGWGDPHFVTFDGLYYSYQGNCTYVLVEEITPTVDNFGVYIDNYHCDANDKVSCPRTLIVHHETQEVLIKTVHMMPIEVEVQVNKQLVALPYKKYGLEVYQSGINFVVDIPRLGAQVSYNGLSFSIRLPYHLFGNNTKGQCGTCTNNTADDCILPSGEIISNCEVAADEWLVNDPSKPHCPHKGLTTKRPAITTPGPFPENCTVSPVCQLIMDSLFSQCHPFVPPKHYYEACLFDSCFVAGSGMECASVQAYAALCAQEGVCIDWRNHTQGACAVTCPAHRQYQACGPSEEPTCQSSSPKNSTLLVEGCFCPEGTTKFAPGYDVCVKICGCVGPDNVPREFGEHFEFDCKDCVCLEGGSGIVCQPKKCARGNLTTCEEDGTYLVVEADPDDKCCNTTSCKCDPKRCKAERPSCLLGFEVKSEHVPGKCCPVYSCVPKGVCVHENAEYQPGSPVYSNKCQDCVCTDSMDNSTQLNVISCTHVPCNISCSSGFELVEVPGECCKKCQQTHCIIKRPEQQYIILKPGEIQKNPNDRCTFFSCMKINNQLISSVSNITCPDFDPSDCVPGSITYMPNGCCKTCIHNPNNTVPCSAIPVMKEISYNGCAKNISMNFCAGSCGTFAMYSAQAQDLDHGCSCCREERTSVRMVSLDCPDGSKLSHSYTHIESCLCQGTVCELPQAQQSRTRRSSPRLLGRK.

A run of 4 repeats spans residues Pro17–Thr27, Pro28–Thr38, Pro39–Thr50, and Pro51–Thr62. The 5 X 11 AA approximate tandem repeats stretch occupies residues Pro17–Thr70. The interval Pro17–Leu75 is disordered. Residues Thr29–Thr70 are compositionally biased toward low complexity. One copy of the 5; truncated repeat lies at Pro63–Thr70. N-linked (GlcNAc...) asparagine glycans are attached at residues Asn91 and Asn164. Residues Cys141–Pro324 form the VWFD domain. 3 cysteine pairs are disulfide-bonded: Cys143–Cys284, Cys165–Cys323, and Cys189–Cys197. The tract at residues Pro149 to Lys837 is probably important for disulfide-bond mediated mucin polymerization (link domain). N-linked (GlcNAc...) asparagine glycans are attached at residues Asn278, Asn289, Asn344, Asn410, Asn444, Asn515, Asn538, Asn612, Asn627, Asn695, Asn727, and Asn749. VWFC domains follow at residues Cys472–Lys543 and Gly581–Gln648. Intrachain disulfides connect Cys732–Cys779, Cys746–Cys793, Cys755–Cys809, and Cys759–Cys811. Residues Cys732–Glu817 enclose the CTCK domain.

As to quaternary structure, multimeric. As to expression, coats the epithelia of the intestines.

It is found in the secreted. The polypeptide is Intestinal mucin-like protein (Rattus norvegicus (Rat)).